Reading from the N-terminus, the 199-residue chain is Probable thymidylate kinase (199 aa).

9 to 16 is a binding site for ATP; sequence GIDGCGKT.

This sequence belongs to the thymidylate kinase family.

It carries out the reaction dTMP + ATP = dTDP + ADP. This Methanococcus maripaludis (strain C7 / ATCC BAA-1331) protein is Probable thymidylate kinase.